Consider the following 426-residue polypeptide: Glutamate-1-semialdehyde 2,1-aminomutase (426 aa).

Lys-265 is subject to N6-(pyridoxal phosphate)lysine.

It belongs to the class-III pyridoxal-phosphate-dependent aminotransferase family. HemL subfamily. In terms of assembly, homodimer. Requires pyridoxal 5'-phosphate as cofactor.

The protein localises to the cytoplasm. It catalyses the reaction (S)-4-amino-5-oxopentanoate = 5-aminolevulinate. It functions in the pathway porphyrin-containing compound metabolism; protoporphyrin-IX biosynthesis; 5-aminolevulinate from L-glutamyl-tRNA(Glu): step 2/2. This chain is Glutamate-1-semialdehyde 2,1-aminomutase, found in Escherichia coli (strain SMS-3-5 / SECEC).